The primary structure comprises 81 residues: Small ribosomal subunit protein bS16 (81 aa).

It belongs to the bacterial ribosomal protein bS16 family.

The protein is Small ribosomal subunit protein bS16 of Neisseria gonorrhoeae (strain ATCC 700825 / FA 1090).